The sequence spans 295 residues: Protease HtpX homolog (295 aa).

The next 2 membrane-spanning stretches (helical) occupy residues 15–35 (LVMA…GYAF) and 39–59 (AQTG…VILG). A Zn(2+)-binding site is contributed by His-143. Residue Glu-144 is part of the active site. Residue His-147 participates in Zn(2+) binding. 2 helical membrane passes run 159 to 179 (ALAL…AMWW) and 195 to 215 (VIML…ASMA). Position 224 (Glu-224) interacts with Zn(2+).

It belongs to the peptidase M48B family. It depends on Zn(2+) as a cofactor.

The protein localises to the cell membrane. The sequence is that of Protease HtpX homolog from Ligilactobacillus salivarius (strain UCC118) (Lactobacillus salivarius).